We begin with the raw amino-acid sequence, 378 residues long: Secreted LysM effector ldpA (378 aa).

The first 19 residues, 1–19 (MMKSIRFLASALALCLVDA), serve as a signal peptide directing secretion. Positions 118 to 131 (WTPPTTTTRSTSSS) are enriched in low complexity. Residues 118-139 (WTPPTTTTRSTSSSAGNGVTTP) are disordered. The region spanning 152-198 (RFYLVVSGDSCYDIAAAQGISLDNFYTWNPAVGSSCGGLWPDYYVCV) is the LysM 1 domain. Residues 208 to 230 (TTTTTTTPTTTSTTTTTAGNGVT) form a disordered region. LysM domains lie at 245 to 291 (KFYQ…YVCV) and 330 to 376 (KFYL…YVCV).

It belongs to the secreted LysM effector family.

The protein localises to the secreted. The protein resides in the cell wall. It localises to the extracellular space. Its subcellular location is the extracellular matrix. Its function is as follows. Cell wall chitin of A.fumigatus recruits lung eosinophils during infection and ldpA might have a role in sequestration of chitin and act as triggers of host immunity to dampen host defense. In Aspergillus fumigatus (strain ATCC MYA-4609 / CBS 101355 / FGSC A1100 / Af293) (Neosartorya fumigata), this protein is Secreted LysM effector ldpA.